Reading from the N-terminus, the 252-residue chain is Carbohydrate deacetylase (252 aa).

Mg(2+) contacts are provided by H59 and H122.

Belongs to the YdjC deacetylase family. In terms of assembly, homodimer. Mg(2+) is required as a cofactor.

Functionally, probably catalyzes the deacetylation of acetylated carbohydrates an important step in the degradation of oligosaccharides. In Vibrio vulnificus (strain CMCP6), this protein is Carbohydrate deacetylase.